The sequence spans 238 residues: Fatty acid metabolism regulator protein (238 aa).

The region spanning 6 to 74 (KGPASFAEKY…HGKPTRVNNF (69 aa)) is the HTH gntR-type domain. A DNA-binding region (H-T-H motif) is located at residues 34–53 (ERELSELIGVTRTTLREVLQ).

As to quaternary structure, homodimer.

Its subcellular location is the cytoplasm. In terms of biological role, multifunctional regulator of fatty acid metabolism. The chain is Fatty acid metabolism regulator protein from Shewanella baltica (strain OS223).